The chain runs to 335 residues: Ketol-acid reductoisomerase (NADP(+)) (335 aa).

Residues 5–185 (SKIYTDKDSN…GATRAGVIPT (181 aa)) enclose the KARI N-terminal Rossmann domain. NADP(+) is bound by residues 28-31 (YGSQ), S56, and 86-89 (DMVQ). H111 is a catalytic residue. Residue G137 coordinates NADP(+). Residues 186–331 (TFKEETETDL…NQLKDLIQKG (146 aa)) enclose the KARI C-terminal knotted domain. Mg(2+)-binding residues include D194, E198, E230, and E234. S255 is a binding site for substrate.

Belongs to the ketol-acid reductoisomerase family. Requires Mg(2+) as cofactor.

It catalyses the reaction (2R)-2,3-dihydroxy-3-methylbutanoate + NADP(+) = (2S)-2-acetolactate + NADPH + H(+). The enzyme catalyses (2R,3R)-2,3-dihydroxy-3-methylpentanoate + NADP(+) = (S)-2-ethyl-2-hydroxy-3-oxobutanoate + NADPH + H(+). It functions in the pathway amino-acid biosynthesis; L-isoleucine biosynthesis; L-isoleucine from 2-oxobutanoate: step 2/4. The protein operates within amino-acid biosynthesis; L-valine biosynthesis; L-valine from pyruvate: step 2/4. In terms of biological role, involved in the biosynthesis of branched-chain amino acids (BCAA). Catalyzes an alkyl-migration followed by a ketol-acid reduction of (S)-2-acetolactate (S2AL) to yield (R)-2,3-dihydroxy-isovalerate. In the isomerase reaction, S2AL is rearranged via a Mg-dependent methyl migration to produce 3-hydroxy-3-methyl-2-ketobutyrate (HMKB). In the reductase reaction, this 2-ketoacid undergoes a metal-dependent reduction by NADPH to yield (R)-2,3-dihydroxy-isovalerate. This chain is Ketol-acid reductoisomerase (NADP(+)), found in Saccharolobus islandicus (strain M.16.27) (Sulfolobus islandicus).